An 81-amino-acid polypeptide reads, in one-letter code: Photosystem I iron-sulfur center (81 aa).

4Fe-4S ferredoxin-type domains follow at residues 2-31 (SHSV…MIPW) and 39-68 (IASA…VRVY). Cysteine 11, cysteine 14, cysteine 17, cysteine 21, cysteine 48, cysteine 51, cysteine 54, and cysteine 58 together coordinate [4Fe-4S] cluster.

In terms of assembly, the eukaryotic PSI reaction center is composed of at least 11 subunits. It depends on [4Fe-4S] cluster as a cofactor.

The protein resides in the plastid. Its subcellular location is the chloroplast thylakoid membrane. The catalysed reaction is reduced [plastocyanin] + hnu + oxidized [2Fe-2S]-[ferredoxin] = oxidized [plastocyanin] + reduced [2Fe-2S]-[ferredoxin]. Functionally, apoprotein for the two 4Fe-4S centers FA and FB of photosystem I (PSI); essential for photochemical activity. FB is the terminal electron acceptor of PSI, donating electrons to ferredoxin. The C-terminus interacts with PsaA/B/D and helps assemble the protein into the PSI complex. Required for binding of PsaD and PsaE to PSI. PSI is a plastocyanin-ferredoxin oxidoreductase, converting photonic excitation into a charge separation, which transfers an electron from the donor P700 chlorophyll pair to the spectroscopically characterized acceptors A0, A1, FX, FA and FB in turn. The protein is Photosystem I iron-sulfur center of Helianthus annuus (Common sunflower).